The chain runs to 292 residues: Poly(U)-specific endoribonuclease-B (292 aa).

Residues 8 to 285 (VNHELSKLFN…IGTAYPALLS (278 aa)) enclose the EndoU domain. Active-site residues include His162, His178, and Lys224.

Belongs to the ENDOU family. In terms of assembly, monomer. Mn(2+) is required as a cofactor.

It is found in the nucleus. It catalyses the reaction uridylyl-uridylyl-ribonucleotide-RNA = a 3'-end uridylyl-2',3'-cyclophospho-uridine-RNA + a 5'-end dephospho-ribonucleoside-RNA. In terms of biological role, poly(U)-specific endoribonuclease involved in the processing of intron-encoded box C/D snoRNAs, such as U16 and U86. Releases products that have 2',3'-cyclic phosphate termini at the 3'-end. This chain is Poly(U)-specific endoribonuclease-B (endou-b), found in Xenopus laevis (African clawed frog).